Reading from the N-terminus, the 377-residue chain is UPF0754 membrane protein GTNG_0550 (377 aa).

A run of 2 helical transmembrane segments spans residues 7–27 (LLFM…IAIV) and 357–377 (YLGA…GLWL).

The protein belongs to the UPF0754 family.

Its subcellular location is the cell membrane. The sequence is that of UPF0754 membrane protein GTNG_0550 from Geobacillus thermodenitrificans (strain NG80-2).